The primary structure comprises 149 residues: Nucleoside diphosphate kinase (149 aa).

ATP is bound by residues K9, F57, R85, T91, R102, and N112. H115 acts as the Pros-phosphohistidine intermediate in catalysis.

It belongs to the NDK family. As to quaternary structure, homotetramer. The cofactor is Mg(2+).

It is found in the cytoplasm. It catalyses the reaction a 2'-deoxyribonucleoside 5'-diphosphate + ATP = a 2'-deoxyribonucleoside 5'-triphosphate + ADP. It carries out the reaction a ribonucleoside 5'-diphosphate + ATP = a ribonucleoside 5'-triphosphate + ADP. In terms of biological role, major role in the synthesis of nucleoside triphosphates other than ATP. The ATP gamma phosphate is transferred to the NDP beta phosphate via a ping-pong mechanism, using a phosphorylated active-site intermediate. This chain is Nucleoside diphosphate kinase, found in Carboxydothermus hydrogenoformans (strain ATCC BAA-161 / DSM 6008 / Z-2901).